We begin with the raw amino-acid sequence, 612 residues long: Elongation factor 4 (612 aa).

Positions Lys11 to Ser193 constitute a tr-type G domain. Residues Asp23–Thr28 and Asn140–Asp143 contribute to the GTP site.

Belongs to the TRAFAC class translation factor GTPase superfamily. Classic translation factor GTPase family. LepA subfamily.

The protein localises to the cell membrane. It carries out the reaction GTP + H2O = GDP + phosphate + H(+). Its function is as follows. Required for accurate and efficient protein synthesis under certain stress conditions. May act as a fidelity factor of the translation reaction, by catalyzing a one-codon backward translocation of tRNAs on improperly translocated ribosomes. Back-translocation proceeds from a post-translocation (POST) complex to a pre-translocation (PRE) complex, thus giving elongation factor G a second chance to translocate the tRNAs correctly. Binds to ribosomes in a GTP-dependent manner. The sequence is that of Elongation factor 4 from Lacticaseibacillus paracasei (strain ATCC 334 / BCRC 17002 / CCUG 31169 / CIP 107868 / KCTC 3260 / NRRL B-441) (Lactobacillus paracasei).